The following is a 417-amino-acid chain: D-inositol 3-phosphate glycosyltransferase (417 aa).

Residue His10 coordinates 1D-myo-inositol 3-phosphate. Residues 16–17 (QP) and Gly24 contribute to the UDP-N-acetyl-alpha-D-glucosamine site. Residues 21-26 (DAGGMN), Lys79, Tyr112, Thr136, and Arg156 contribute to the 1D-myo-inositol 3-phosphate site. UDP-N-acetyl-alpha-D-glucosamine is bound by residues Arg230, Lys235, and Gln296. Mg(2+)-binding residues include Tyr305, Arg306, and Ala308. UDP-N-acetyl-alpha-D-glucosamine-binding residues include Glu318 and Glu326. Thr332 provides a ligand contact to Mg(2+).

The protein belongs to the glycosyltransferase group 1 family. MshA subfamily. In terms of assembly, homodimer.

The catalysed reaction is 1D-myo-inositol 3-phosphate + UDP-N-acetyl-alpha-D-glucosamine = 1D-myo-inositol 2-acetamido-2-deoxy-alpha-D-glucopyranoside 3-phosphate + UDP + H(+). Catalyzes the transfer of a N-acetyl-glucosamine moiety to 1D-myo-inositol 3-phosphate to produce 1D-myo-inositol 2-acetamido-2-deoxy-glucopyranoside 3-phosphate in the mycothiol biosynthesis pathway. This chain is D-inositol 3-phosphate glycosyltransferase, found in Actinosynnema mirum (strain ATCC 29888 / DSM 43827 / JCM 3225 / NBRC 14064 / NCIMB 13271 / NRRL B-12336 / IMRU 3971 / 101).